A 457-amino-acid chain; its full sequence is Adenylosuccinate synthetase (457 aa).

Residues glycine 45–lysine 51 and glycine 73–threonine 75 each bind GTP. Aspartate 46 serves as the catalytic Proton acceptor. Residues aspartate 46 and glycine 73 each contribute to the Mg(2+) site. IMP contacts are provided by residues aspartate 46–lysine 49, asparagine 71–histidine 74, threonine 163, arginine 177, asparagine 255, threonine 270, and arginine 334. Histidine 74 acts as the Proton donor in catalysis. Position 330-336 (valine 330–arginine 336) interacts with substrate. GTP contacts are provided by residues arginine 336, lysine 362–aspartate 364, and glycine 444–glycine 446.

It belongs to the adenylosuccinate synthetase family. Homodimer. The cofactor is Mg(2+).

The protein resides in the cytoplasm. It carries out the reaction IMP + L-aspartate + GTP = N(6)-(1,2-dicarboxyethyl)-AMP + GDP + phosphate + 2 H(+). It functions in the pathway purine metabolism; AMP biosynthesis via de novo pathway; AMP from IMP: step 1/2. In terms of biological role, plays an important role in the de novo pathway and in the salvage pathway of purine nucleotide biosynthesis. Catalyzes the first committed step in the biosynthesis of AMP from IMP. The sequence is that of Adenylosuccinate synthetase from Aedes aegypti (Yellowfever mosquito).